A 327-amino-acid polypeptide reads, in one-letter code: Golgi to ER traffic protein 4 homolog (327 aa).

Ala-2 bears the N-acetylalanine mark. Ser-12 is modified (phosphoserine). The interacts with BAG6 stretch occupies residues 195-271; it reads FVAQAVLQFL…YQPSLRRDPM (77 aa). Residues 307 to 327 form a disordered region; sequence GSSEQEDGEESPSDGSPIELD.

This sequence belongs to the GET4 family. In terms of assembly, component of the BAG6/BAT3 complex, at least composed of BAG6, UBL4A and GET4/TRC35. Interacts with BAG6; the interaction is direct and localizes BAG6 to the cytosol. Interacts with GET3. In terms of processing, ubiquitinated by RNF12, leading to proteasomal degradation. When unassembled from BAG6; ubiquitinylation is modulated by BAG6 quality control role and effectuated by RNF126.

It is found in the cytoplasm. Its subcellular location is the cytosol. As part of a cytosolic protein quality control complex, the BAG6/BAT3 complex, maintains misfolded and hydrophobic patches-containing proteins in a soluble state and participates in their proper delivery to the endoplasmic reticulum or alternatively can promote their sorting to the proteasome where they undergo degradation. The BAG6/BAT3 complex is involved in the post-translational delivery of tail-anchored/type II transmembrane proteins to the endoplasmic reticulum membrane. Recruited to ribosomes, it interacts with the transmembrane region of newly synthesized tail-anchored proteins and together with SGTA and ASNA1 mediates their delivery to the endoplasmic reticulum. Client proteins that cannot be properly delivered to the endoplasmic reticulum are ubiquitinated and sorted to the proteasome. Similarly, the BAG6/BAT3 complex also functions as a sorting platform for proteins of the secretory pathway that are mislocalized to the cytosol either delivering them to the proteasome for degradation or to the endoplasmic reticulum. The BAG6/BAT3 complex also plays a role in the endoplasmic reticulum-associated degradation (ERAD), a quality control mechanism that eliminates unwanted proteins of the endoplasmic reticulum through their retrotranslocation to the cytosol and their targeting to the proteasome. It maintains these retrotranslocated proteins in an unfolded yet soluble state condition in the cytosol to ensure their proper delivery to the proteasome. This Homo sapiens (Human) protein is Golgi to ER traffic protein 4 homolog.